The following is a 132-amino-acid chain: Large-conductance mechanosensitive channel (132 aa).

3 helical membrane passes run phenylalanine 8–glycine 28, isoleucine 30–valine 50, and glycine 67–isoleucine 87.

The protein belongs to the MscL family. Homopentamer.

Its subcellular location is the cell membrane. Channel that opens in response to stretch forces in the membrane lipid bilayer. May participate in the regulation of osmotic pressure changes within the cell. In Bacillus cytotoxicus (strain DSM 22905 / CIP 110041 / 391-98 / NVH 391-98), this protein is Large-conductance mechanosensitive channel.